A 74-amino-acid polypeptide reads, in one-letter code: Protein krueppel (74 aa).

C2H2-type zinc fingers lie at residues 1-4, 10-32, 38-60, and 66-74; these read ERTH, FKCP…MRLH, YHCS…LRVH, and YTCEICKAK.

The protein belongs to the krueppel C2H2-type zinc-finger protein family.

Its subcellular location is the nucleus. Functionally, krueppel is a gap class segmentation protein. This Bradysia coprophila (Dark-winged fungus gnat) protein is Protein krueppel (Kr).